The sequence spans 122 residues: Histone H2B.1 (122 aa).

Residues 1–10 (MAPKKAPAAA) show a composition bias toward low complexity. Residues 1-28 (MAPKKAPAAAAEKKVKKAPTTEKKNKKK) form a disordered region. Ala-2 carries the post-translational modification N,N,N-trimethylalanine. Residues Lys-5 and Lys-42 each carry the N6-acetyllysine modification. Residue Lys-116 forms a Glycyl lysine isopeptide (Lys-Gly) (interchain with G-Cter in ubiquitin) linkage.

Belongs to the histone H2B family. As to quaternary structure, the nucleosome is a histone octamer containing two molecules each of H2A, H2B, H3 and H4 assembled in one H3-H4 heterotetramer and two H2A-H2B heterodimers. The octamer wraps approximately 147 bp of DNA. In terms of processing, acetylation occurs almost exclusively in the MAC. Post-translationally, monoubiquitination to form H2BK115ub1 gives a specific tag for epigenetic transcriptional activation and is also prerequisite for H3K4me and H3K79me formation.

The protein localises to the nucleus. The protein resides in the chromosome. Core component of nucleosome. Nucleosomes wrap and compact DNA into chromatin, limiting DNA accessibility to the cellular machineries which require DNA as a template. Histones thereby play a central role in transcription regulation, DNA repair, DNA replication and chromosomal stability. DNA accessibility is regulated via a complex set of post-translational modifications of histones, also called histone code, and nucleosome remodeling. This chain is Histone H2B.1 (HTB1), found in Tetrahymena thermophila (strain SB210).